Reading from the N-terminus, the 449-residue chain is GTPase Der (449 aa).

EngA-type G domains follow at residues 3 to 167 (SIVA…PDEP) and 175 to 350 (TNIA…EQYS). GTP-binding positions include 9-16 (GRPNVGKS), 56-60 (DTGGF), 119-122 (NKVD), 181-188 (GRPNVGKS), 228-232 (DTAGI), and 293-296 (NKWD). Positions 351–435 (RRVTTSELNR…PFRLLFRGRE (85 aa)) constitute a KH-like domain.

It belongs to the TRAFAC class TrmE-Era-EngA-EngB-Septin-like GTPase superfamily. EngA (Der) GTPase family. Associates with the 50S ribosomal subunit.

Its function is as follows. GTPase that plays an essential role in the late steps of ribosome biogenesis. The sequence is that of GTPase Der from Trichlorobacter lovleyi (strain ATCC BAA-1151 / DSM 17278 / SZ) (Geobacter lovleyi).